Consider the following 257-residue polypeptide: 5'-nucleotidase SurE (257 aa).

A divalent metal cation is bound by residues D9, D10, S40, and N92.

This sequence belongs to the SurE nucleotidase family. A divalent metal cation serves as cofactor.

It localises to the cytoplasm. The enzyme catalyses a ribonucleoside 5'-phosphate + H2O = a ribonucleoside + phosphate. Functionally, nucleotidase that shows phosphatase activity on nucleoside 5'-monophosphates. In Alkalilimnicola ehrlichii (strain ATCC BAA-1101 / DSM 17681 / MLHE-1), this protein is 5'-nucleotidase SurE.